An 86-amino-acid polypeptide reads, in one-letter code: MHTGRNSEAHRAKELATLSIIAYSKKPCISDNAALESKESNSAKVPMVRDRRVIRYLGLYRIAGTWNQYIINGGSTKKKARRQQRS.

This is an uncharacterized protein from Ovis aries (Sheep).